Reading from the N-terminus, the 398-residue chain is tRNA-specific 2-thiouridylase MnmA (398 aa).

ATP-binding positions include 33 to 40 (GMSGGVDS) and M59. An interaction with target base in tRNA region spans residues 119–121 (NPD). C124 functions as the Nucleophile in the catalytic mechanism. Residues C124 and C226 are joined by a disulfide bond. Position 148 (G148) interacts with ATP. Positions 176 to 178 (KDQ) are interaction with tRNA. The active-site Cysteine persulfide intermediate is C226. The interaction with tRNA stretch occupies residues 343-344 (RY).

This sequence belongs to the MnmA/TRMU family.

It is found in the cytoplasm. It carries out the reaction S-sulfanyl-L-cysteinyl-[protein] + uridine(34) in tRNA + AH2 + ATP = 2-thiouridine(34) in tRNA + L-cysteinyl-[protein] + A + AMP + diphosphate + H(+). Its function is as follows. Catalyzes the 2-thiolation of uridine at the wobble position (U34) of tRNA, leading to the formation of s(2)U34. This Psychrobacter sp. (strain PRwf-1) protein is tRNA-specific 2-thiouridylase MnmA.